The sequence spans 222 residues: Kunitz trypsin inhibitor 3 (222 aa).

The first 23 residues, 1–23 (MEKLTLSFITLTVLSAIFTAASA), serve as a signal peptide directing secretion. N-linked (GlcNAc...) asparagine glycosylation is present at asparagine 65. 2 disulfide bridges follow: cysteine 72/cysteine 119 and cysteine 165/cysteine 173. Residue asparagine 175 is glycosylated (N-linked (GlcNAc...) asparagine).

The protein belongs to the protease inhibitor I3 (leguminous Kunitz-type inhibitor) family.

Its function is as follows. Exhibits Kunitz trypsin protease inhibitor activity. This is Kunitz trypsin inhibitor 3 from Arabidopsis thaliana (Mouse-ear cress).